Consider the following 1025-residue polypeptide: Probable outer membrane protein PmpF (1025 aa).

A signal peptide spans 1-20 (MTRRILPLSLVFIPLSCISA). The segment at 654 to 681 (NSTETQTANNSIQEQKNTSETFDSNSTT) is disordered. Over residues 659–681 (QTANNSIQEQKNTSETFDSNSTT) the composition is skewed to polar residues. In terms of domain architecture, Autotransporter spans 748–1025 (LLPDDSWFAL…YMNAGGALVF (278 aa)).

The protein belongs to the PMP outer membrane protein family.

It is found in the secreted. It localises to the cell wall. The protein localises to the cell outer membrane. The polypeptide is Probable outer membrane protein PmpF (pmpF) (Chlamydia muridarum (strain MoPn / Nigg)).